Reading from the N-terminus, the 562-residue chain is Potassium-transporting ATPase potassium-binding subunit (562 aa).

12 consecutive transmembrane segments (helical) span residues 5-25 (AFLL…PLGS), 63-83 (AAAI…LLMA), 132-152 (GLTV…FALI), 175-195 (LYVL…QGVL), 250-270 (LSNI…CFAF), 279-299 (QGHA…AVVM), 327-347 (FGVL…TGAV), 356-376 (ALGG…FGGV), 379-399 (GLYG…LMIG), 416-436 (MTAL…ALAL), 483-503 (VLLA…VLAI), and 526-546 (LFIG…FIPA).

Belongs to the KdpA family. As to quaternary structure, the system is composed of three essential subunits: KdpA, KdpB and KdpC.

It is found in the cell inner membrane. Part of the high-affinity ATP-driven potassium transport (or Kdp) system, which catalyzes the hydrolysis of ATP coupled with the electrogenic transport of potassium into the cytoplasm. This subunit binds the periplasmic potassium ions and delivers the ions to the membrane domain of KdpB through an intramembrane tunnel. This Pectobacterium carotovorum subsp. carotovorum (strain PC1) protein is Potassium-transporting ATPase potassium-binding subunit.